The primary structure comprises 287 residues: Large ribosomal subunit protein uL2 (287 aa).

Residues 221-287 (RGSVMNPCDH…SKRSRGGRDS (67 aa)) are disordered. Residues 258-287 (KTRKKNKPSNKLVVRRRRRISKRSRGGRDS) show a composition bias toward basic residues.

Belongs to the universal ribosomal protein uL2 family. In terms of assembly, part of the 50S ribosomal subunit. Forms a bridge to the 30S subunit in the 70S ribosome.

Functionally, one of the primary rRNA binding proteins. Required for association of the 30S and 50S subunits to form the 70S ribosome, for tRNA binding and peptide bond formation. It has been suggested to have peptidyltransferase activity; this is somewhat controversial. Makes several contacts with the 16S rRNA in the 70S ribosome. The polypeptide is Large ribosomal subunit protein uL2 (Prochlorococcus marinus (strain MIT 9301)).